An 88-amino-acid polypeptide reads, in one-letter code: Small ribosomal subunit protein uS17 (88 aa).

It belongs to the universal ribosomal protein uS17 family. In terms of assembly, part of the 30S ribosomal subunit.

Functionally, one of the primary rRNA binding proteins, it binds specifically to the 5'-end of 16S ribosomal RNA. The polypeptide is Small ribosomal subunit protein uS17 (Prochlorococcus marinus (strain MIT 9515)).